Here is a 224-residue protein sequence, read N- to C-terminus: 2-C-methyl-D-erythritol 4-phosphate cytidylyltransferase (224 aa).

This sequence belongs to the IspD/TarI cytidylyltransferase family. IspD subfamily.

It carries out the reaction 2-C-methyl-D-erythritol 4-phosphate + CTP + H(+) = 4-CDP-2-C-methyl-D-erythritol + diphosphate. It functions in the pathway isoprenoid biosynthesis; isopentenyl diphosphate biosynthesis via DXP pathway; isopentenyl diphosphate from 1-deoxy-D-xylulose 5-phosphate: step 2/6. Functionally, catalyzes the formation of 4-diphosphocytidyl-2-C-methyl-D-erythritol from CTP and 2-C-methyl-D-erythritol 4-phosphate (MEP). This Saccharopolyspora erythraea (strain ATCC 11635 / DSM 40517 / JCM 4748 / NBRC 13426 / NCIMB 8594 / NRRL 2338) protein is 2-C-methyl-D-erythritol 4-phosphate cytidylyltransferase.